The sequence spans 398 residues: Cystathionine gamma-lyase (398 aa).

Substrate-binding residues include Arg61, Tyr113, and Arg118. An N6-(pyridoxal phosphate)lysine modification is found at Lys211. Substrate is bound at residue Glu338.

It belongs to the trans-sulfuration enzymes family. Homotetramer. Interacts with CALM in a calcium-dependent manner. Pyridoxal 5'-phosphate is required as a cofactor. As to expression, detected in liver and kidney, and at lower levels in small intestine (at protein level). Highly expressed in liver, kidney and lung, detected at lower levels in stomach, small intestine and adipose tissue, and hardly found in heart, bone, and thymus.

Its subcellular location is the cytoplasm. It catalyses the reaction L,L-cystathionine + H2O = 2-oxobutanoate + L-cysteine + NH4(+). The enzyme catalyses L-cysteine + H2O = hydrogen sulfide + pyruvate + NH4(+) + H(+). It carries out the reaction L-homocysteine + H2O = 2-oxobutanoate + hydrogen sulfide + NH4(+) + H(+). The catalysed reaction is L-homoserine = 2-oxobutanoate + NH4(+). It catalyses the reaction L-selenocystathionine + H2O = L-selenocysteine + 2-oxobutanoate + NH4(+). It participates in amino-acid biosynthesis; L-cysteine biosynthesis; L-cysteine from L-homocysteine and L-serine: step 2/2. Activated by calmodulin in the presence of calcium ions. Its function is as follows. Catalyzes the last step in the trans-sulfuration pathway from L-methionine to L-cysteine in a pyridoxal-5'-phosphate (PLP)-dependent manner, which consists on cleaving the L,L-cystathionine molecule into L-cysteine, ammonia and 2-oxobutanoate. Part of the L-cysteine derived from the trans-sulfuration pathway is utilized for biosynthesis of the ubiquitous antioxidant glutathione. Besides its role in the conversion of L-cystathionine into L-cysteine, it utilizes L-cysteine and L-homocysteine as substrates (at much lower rates than L,L-cystathionine) to produce hydrogen sulfide (H2S). In vitro, it converts two L-cysteine molecules into lanthionine and H2S, and two L-homocysteine molecules to homolanthionine and H2S, which can be particularly relevant under conditions of severe hyperhomocysteinemia. Lanthionine and homolanthionine are structural homologs of L,L-cystathionine that differ by the absence or presence of an extra methylene group, respectively. Acts as a cysteine-protein sulfhydrase by mediating sulfhydration of target proteins: sulfhydration consists of converting -SH groups into -SSH on specific cysteine residues of target proteins such as GAPDH, PTPN1 and NF-kappa-B subunit RELA, thereby regulating their function. By generating the gasotransmitter H2S, it participates in a number of physiological processes such as vasodilation, bone protection, and inflammation. Plays an essential role in myogenesis by contributing to the biogenesis of H2S in skeletal muscle tissue. Can also accept homoserine as substrate. Catalyzes the elimination of selenocystathionine (which can be derived from the diet) to yield selenocysteine, ammonia and 2-oxobutanoate. This chain is Cystathionine gamma-lyase (Cth), found in Mus musculus (Mouse).